The primary structure comprises 395 residues: Elongation factor Tu (395 aa).

The 195-residue stretch at 10 to 204 folds into the tr-type G domain; it reads KPHVNIGTIG…VVDEYIPTPV (195 aa). The interval 19–26 is G1; sequence GHVDHGKT. 19–26 lines the GTP pocket; it reads GHVDHGKT. Thr26 provides a ligand contact to Mg(2+). Positions 60–64 are G2; sequence GITIN. Positions 81 to 84 are G3; it reads DAPG. GTP contacts are provided by residues 81–85 and 136–139; these read DAPGH and NKTD. Positions 136–139 are G4; that stretch reads NKTD. Residues 174–176 are G5; that stretch reads SAL.

This sequence belongs to the TRAFAC class translation factor GTPase superfamily. Classic translation factor GTPase family. EF-Tu/EF-1A subfamily. Monomer.

It localises to the cytoplasm. It carries out the reaction GTP + H2O = GDP + phosphate + H(+). GTP hydrolase that promotes the GTP-dependent binding of aminoacyl-tRNA to the A-site of ribosomes during protein biosynthesis. The polypeptide is Elongation factor Tu (Lactiplantibacillus plantarum (strain ATCC BAA-793 / NCIMB 8826 / WCFS1) (Lactobacillus plantarum)).